A 380-amino-acid chain; its full sequence is MTHIPAAPAAVDYLLLTPGPLSTTATVRAAMLQDSCTWDADYNQGVVEPIRRELVRLAAGPEYQSDYSAVLLQGSGSYVVESVLGSAIGVDECLLIINNGAYGARMGEMARCLGLRHHELDCGETTRPEAAAIEAMLVRHPEITHLAMVHCETTTGMLNPLEEVAALCQRRGIRLIVDAMSSFGGIPIDMGRLGIEFLISSANKCIQGVPGFGFVIARRAALAACAGCARSVSLDLHAQWQTMEQQGGKWRFTSPTHTVLAFAQALRELDEEGGIAARHRRYRDNQRTLVDGMAALGFAPLLPEQWQSPIITAFYSPAHPDYRFADFYQRLKAQGFVIYPGKVSQADCFRIGNIGDVTPARVRCLLVAMASACYWQGDAR.

Position 204 is an N6-(pyridoxal phosphate)lysine (Lys-204).

The protein belongs to the class-V pyridoxal-phosphate-dependent aminotransferase family. PhnW subfamily. As to quaternary structure, homodimer. Requires pyridoxal 5'-phosphate as cofactor.

The enzyme catalyses (2-aminoethyl)phosphonate + pyruvate = phosphonoacetaldehyde + L-alanine. Its function is as follows. Involved in phosphonate degradation. This is 2-aminoethylphosphonate--pyruvate transaminase from Aeromonas hydrophila subsp. hydrophila (strain ATCC 7966 / DSM 30187 / BCRC 13018 / CCUG 14551 / JCM 1027 / KCTC 2358 / NCIMB 9240 / NCTC 8049).